The primary structure comprises 313 residues: Aspartate carbamoyltransferase catalytic subunit (313 aa).

Carbamoyl phosphate contacts are provided by Arg-58 and Thr-59. Lys-86 contributes to the L-aspartate binding site. The carbamoyl phosphate site is built by Arg-108, His-136, and Gln-139. 2 residues coordinate L-aspartate: Arg-169 and Arg-223. Positions 265 and 266 each coordinate carbamoyl phosphate.

Belongs to the aspartate/ornithine carbamoyltransferase superfamily. ATCase family. As to quaternary structure, heterododecamer (2C3:3R2) of six catalytic PyrB chains organized as two trimers (C3), and six regulatory PyrI chains organized as three dimers (R2).

It catalyses the reaction carbamoyl phosphate + L-aspartate = N-carbamoyl-L-aspartate + phosphate + H(+). It functions in the pathway pyrimidine metabolism; UMP biosynthesis via de novo pathway; (S)-dihydroorotate from bicarbonate: step 2/3. In terms of biological role, catalyzes the condensation of carbamoyl phosphate and aspartate to form carbamoyl aspartate and inorganic phosphate, the committed step in the de novo pyrimidine nucleotide biosynthesis pathway. The chain is Aspartate carbamoyltransferase catalytic subunit from Anaeromyxobacter sp. (strain K).